We begin with the raw amino-acid sequence, 236 residues long: Octanoyltransferase (236 aa).

The region spanning 36–220 (DQVPDTVLLL…HLAAVLGASS (185 aa)) is the BPL/LPL catalytic domain. Substrate contacts are provided by residues 76 to 83 (RGGKITWH), 150 to 152 (AIG), and 163 to 165 (GFA). Residue C181 is the Acyl-thioester intermediate of the active site.

The protein belongs to the LipB family.

It is found in the cytoplasm. The enzyme catalyses octanoyl-[ACP] + L-lysyl-[protein] = N(6)-octanoyl-L-lysyl-[protein] + holo-[ACP] + H(+). Its pathway is protein modification; protein lipoylation via endogenous pathway; protein N(6)-(lipoyl)lysine from octanoyl-[acyl-carrier-protein]: step 1/2. In terms of biological role, catalyzes the transfer of endogenously produced octanoic acid from octanoyl-acyl-carrier-protein onto the lipoyl domains of lipoate-dependent enzymes. Lipoyl-ACP can also act as a substrate although octanoyl-ACP is likely to be the physiological substrate. The protein is Octanoyltransferase of Thermobifida fusca (strain YX).